A 533-amino-acid polypeptide reads, in one-letter code: Putative replication factor C large subunit (533 aa).

The span at 1–11 shows a compositional bias: polar residues; that stretch reads MSKTAKNTKTI. A disordered region spans residues 1-31; it reads MSKTAKNTKTIKSVKSVNKDNKPNKDNKDDK. A compositionally biased stretch (basic and acidic residues) spans 17–31; that stretch reads VNKDNKPNKDNKDDK.

Belongs to the activator 1 large subunit family.

Its function is as follows. Part of the RFC clamp loader complex which loads the PCNA sliding clamp onto DNA. The chain is Putative replication factor C large subunit from Acanthamoeba polyphaga (Amoeba).